The primary structure comprises 505 residues: Lysine--tRNA ligase (505 aa).

Mg(2+)-binding residues include E415 and E422.

It belongs to the class-II aminoacyl-tRNA synthetase family. As to quaternary structure, homodimer. Mg(2+) is required as a cofactor.

It is found in the cytoplasm. It catalyses the reaction tRNA(Lys) + L-lysine + ATP = L-lysyl-tRNA(Lys) + AMP + diphosphate. This Yersinia enterocolitica serotype O:8 / biotype 1B (strain NCTC 13174 / 8081) protein is Lysine--tRNA ligase.